We begin with the raw amino-acid sequence, 385 residues long: POU domain, class 3, transcription factor 2-B (385 aa).

3 disordered regions span residues 106 to 136 (LVHP…SSNG), 149 to 209 (NGMI…TPTS), and 351 to 385 (EKRM…TSVQ). Residues 122 to 136 (STGSTHLSSMASSNG) show a composition bias toward polar residues. Basic and acidic residues predominate over residues 165-178 (LRDSHDDHHGDHGH). Low complexity predominate over residues 179-196 (QQPSQTQQQQQQHSQLQG). The POU-specific domain maps to 204–278 (EDTPTSDDLE…LLNKWLEEAD (75 aa)). Residues 296 to 355 (KRKKRTSIEVSVKGALESHFLKCPKPAAQEITSLADSLQLEKEVVRVWFCNRRQKEKRMT) constitute a DNA-binding region (homeobox).

The protein belongs to the POU transcription factor family. Class-3 subfamily. In terms of tissue distribution, expressed in the developing brain and spinal cord. Also found in a restricted region of the auditory vesicle during development. In the adult, expression is restricted to the brain.

The protein resides in the nucleus. Its function is as follows. Transcription factor that may be implicated in patterning of the central nervous system during early development. The protein is POU domain, class 3, transcription factor 2-B (pou3f2-b) of Xenopus laevis (African clawed frog).